We begin with the raw amino-acid sequence, 1058 residues long: Carbamoyl phosphate synthase large chain (1058 aa).

The interval 1–401 (MPKRTDIKKI…SLLKACRSLE (401 aa)) is carboxyphosphate synthetic domain. ATP contacts are provided by Arg-129, Arg-169, Gly-175, Gly-176, Lys-208, Ile-210, Glu-215, Gly-241, Ile-242, His-243, Gln-284, and Glu-298. The region spanning 133–327 (KALMKALKQP…IAKIAAKIAI (195 aa)) is the ATP-grasp 1 domain. 3 residues coordinate Mg(2+): Gln-284, Glu-298, and Asn-300. Residues Gln-284, Glu-298, and Asn-300 each contribute to the Mn(2+) site. An oligomerization domain region spans residues 402–546 (IGIYHNECKE…YSTYAFENES (145 aa)). Residues 547 to 929 (QASPNKSILV…ALYKAFEASY (383 aa)) form a carbamoyl phosphate synthetic domain region. Residues 671 to 861 (EKALHDINIP…MAQVATKLIL (191 aa)) form the ATP-grasp 2 domain. Residues Arg-707, Ser-746, Ile-748, Glu-752, Gly-777, Val-778, His-779, Ser-780, Gln-820, and Glu-832 each contribute to the ATP site. The Mg(2+) site is built by Gln-820, Glu-832, and Asn-834. Residues Gln-820, Glu-832, and Asn-834 each coordinate Mn(2+). The MGS-like domain maps to 930-1058 (MHVPDFGNII…ESRSFSIQSL (129 aa)). The segment at 930-1058 (MHVPDFGNII…ESRSFSIQSL (129 aa)) is allosteric domain.

It belongs to the CarB family. As to quaternary structure, composed of two chains; the small (or glutamine) chain promotes the hydrolysis of glutamine to ammonia, which is used by the large (or ammonia) chain to synthesize carbamoyl phosphate. Tetramer of heterodimers (alpha,beta)4. Requires Mg(2+) as cofactor. Mn(2+) is required as a cofactor.

It carries out the reaction hydrogencarbonate + L-glutamine + 2 ATP + H2O = carbamoyl phosphate + L-glutamate + 2 ADP + phosphate + 2 H(+). It catalyses the reaction hydrogencarbonate + NH4(+) + 2 ATP = carbamoyl phosphate + 2 ADP + phosphate + 2 H(+). It functions in the pathway amino-acid biosynthesis; L-arginine biosynthesis; carbamoyl phosphate from bicarbonate: step 1/1. It participates in pyrimidine metabolism; UMP biosynthesis via de novo pathway; (S)-dihydroorotate from bicarbonate: step 1/3. Its function is as follows. Large subunit of the glutamine-dependent carbamoyl phosphate synthetase (CPSase). CPSase catalyzes the formation of carbamoyl phosphate from the ammonia moiety of glutamine, carbonate, and phosphate donated by ATP, constituting the first step of 2 biosynthetic pathways, one leading to arginine and/or urea and the other to pyrimidine nucleotides. The large subunit (synthetase) binds the substrates ammonia (free or transferred from glutamine from the small subunit), hydrogencarbonate and ATP and carries out an ATP-coupled ligase reaction, activating hydrogencarbonate by forming carboxy phosphate which reacts with ammonia to form carbamoyl phosphate. This Streptococcus uberis (strain ATCC BAA-854 / 0140J) protein is Carbamoyl phosphate synthase large chain.